We begin with the raw amino-acid sequence, 95 residues long: Small ribosomal subunit protein bS6 (95 aa).

Belongs to the bacterial ribosomal protein bS6 family.

Its function is as follows. Binds together with bS18 to 16S ribosomal RNA. This is Small ribosomal subunit protein bS6 from Corynebacterium kroppenstedtii (strain DSM 44385 / JCM 11950 / CIP 105744 / CCUG 35717).